A 413-amino-acid chain; its full sequence is MQSWSDTALPSVPGQGPPLRLYDTADRQVRPVTPGKKATMYVCGITPYDATHLGHAATYLTFDLVNRIWRDAGHDVHYVQNVTDVDDPLFERANRDGEDWIVLGIRETALFREDMEALRVLPPKDYIGAVESVNEVVELVEKFVASGAAYIVDDAEFPDVYFRADATEQFGYESGYDRATMEKFFAERGGDPDRVGKRNPLDALVWRAERPGEPSWPSPFGPGRPGWHIECAAIALNRIGSGFDVQGGGSDLIFPHHEFSAAHAESATGDRRFARHYVHTGMIGLDGEKMSKSRGNLVFVSKLRGEGVDPAAIRLGLLSGHYRQDRAWTDQVLEDAQSRLKVWREAAALDSAPSATDTVARLRQHLADDLDTPKALDALDGWARRAIEGGGSDTQAPGEFADAVDALLGISLR.

The segment at 1–21 (MQSWSDTALPSVPGQGPPLRL) is disordered. Cys43 is a Zn(2+) binding site. Residues 43–46 (CGIT), Thr58, and 81–83 (NVT) contribute to the L-cysteinyl-5'-AMP site. The 'HIGH' region signature appears at 45-55 (ITPYDATHLGH). The 'ERGGDP' region signature appears at 187–192 (ERGGDP). Trp227 contributes to the L-cysteinyl-5'-AMP binding site. Cys231 contributes to the Zn(2+) binding site. 249–251 (GSD) is a binding site for L-cysteinyl-5'-AMP. Zn(2+) is bound at residue His256. Ile283 lines the L-cysteinyl-5'-AMP pocket. The 'KMSKS' region motif lies at 289–293 (KMSKS).

Belongs to the class-I aminoacyl-tRNA synthetase family. MshC subfamily. As to quaternary structure, monomer. Requires Zn(2+) as cofactor.

It catalyses the reaction 1D-myo-inositol 2-amino-2-deoxy-alpha-D-glucopyranoside + L-cysteine + ATP = 1D-myo-inositol 2-(L-cysteinylamino)-2-deoxy-alpha-D-glucopyranoside + AMP + diphosphate + H(+). In terms of biological role, catalyzes the ATP-dependent condensation of GlcN-Ins and L-cysteine to form L-Cys-GlcN-Ins. The protein is L-cysteine:1D-myo-inositol 2-amino-2-deoxy-alpha-D-glucopyranoside ligase of Rhodococcus erythropolis (strain PR4 / NBRC 100887).